We begin with the raw amino-acid sequence, 308 residues long: Protoheme IX farnesyltransferase (308 aa).

Transmembrane regions (helical) follow at residues 31–51 (VIELLLVTAIPAMLLAQRGTV), 53–73 (PLLIVNTLIGGMLAAGGANAL), 102–122 (NALVFGLVLTAGSFLWLWWTT), 124–144 (LLSGLLALATIAFYVFIYTLL), 149–169 (TSQNVVWGGAAGCMPVMIGWS), 170–190 (AVTGTIQWPALVMFAIIFFWT), 240–260 (LALATGWLYAAVALVAGVWFL), and 288–308 (YLAVVFCALAIDSAIGLPHLF).

Belongs to the UbiA prenyltransferase family. Protoheme IX farnesyltransferase subfamily.

It localises to the cell membrane. It carries out the reaction heme b + (2E,6E)-farnesyl diphosphate + H2O = Fe(II)-heme o + diphosphate. It functions in the pathway porphyrin-containing compound metabolism; heme O biosynthesis; heme O from protoheme: step 1/1. Its function is as follows. Converts heme B (protoheme IX) to heme O by substitution of the vinyl group on carbon 2 of heme B porphyrin ring with a hydroxyethyl farnesyl side group. This chain is Protoheme IX farnesyltransferase, found in Mycolicibacterium paratuberculosis (strain ATCC BAA-968 / K-10) (Mycobacterium paratuberculosis).